Here is a 357-residue protein sequence, read N- to C-terminus: MTNDYQQLNYLVETDDEADIIIANLVKQLNELKEILLSLDNQDLEINQVNHRTTVHNTSSNTSNNSTSNNIADGNYNSNFFHNFSKETLQTQAKRGFLLLERCSLVGLQQLELEYLNVLGRSFESHQDKINFLVNLRDLTNDHLLDTEKIVSTLEQIFNVIGGTEYTPILNSFFNQSLNDPDPIQREIGLKQFVANLRQRFKTLLQKTNNSIQQLEAEIQIPTTHIKSDEVMFGPPDMNERLVLNDSETDAILRSIEAELESALQNKKQVVVTAVPPIAANLATDSISQETLEHNLNNTETVNTTTVTVTSASETQVRKPQISLRPIFQGNFPKRLSREDIQRYAHQLQELEQSNEG.

This is an uncharacterized protein from Mycoplasma pneumoniae (strain ATCC 29342 / M129 / Subtype 1) (Mycoplasmoides pneumoniae).